A 459-amino-acid polypeptide reads, in one-letter code: MDQTVLDSAFNSPVDSGIAGTTTGSGSTTHFGVGTNFKVSVRSSSRSTDGTDSTDGANSDNVTGSTGSTPAHHSITNLNMALSQHSIDSATAASSTNPFPHFNQADLLNFHQNSLLPHHMFSQFGRYPQFEQKPDVGVLQQQMQMREAKPYKCTQCVKAFANSSYLSQHMRIHLGIKPFGPCNYCGKKFTQLSHLQQHIRTHTGEKPYKCKFTGCDKAFSQLSNLQSHSRCHQTDKPFKCNSCYKCFTDEQSLLDHIPKHKESKHLKIHICPFCGKSYTQQTYLQKHMTKHADRSKASNFGNDVVPADPFDPSLLSWNPMQGMGDNAHDSSSFNISSLTDQFAANTMIGSQSTNYNPAFQNSAFSQLFNIRNNRYLSEYPTSTKNGERAPGFNMITPLENIQRYNGSSSSATAVVTATGSAVVSSTPSSTSSSSAGSSSSQGGVFNPQSLINNMKNHSY.

Polar residues predominate over residues 1–14 (MDQTVLDSAFNSPV). The segment at 1–73 (MDQTVLDSAF…GSTGSTPAHH (73 aa)) is disordered. Over residues 16–56 (SGIAGTTTGSGSTTHFGVGTNFKVSVRSSSRSTDGTDSTDG) the composition is skewed to low complexity. Residues 57-73 (ANSDNVTGSTGSTPAHH) show a composition bias toward polar residues. C2H2-type zinc fingers lie at residues 151-173 (YKCTQCVKAFANSSYLSQHMRIH), 180-202 (GPCNYCGKKFTQLSHLQQHIRTH), 208-232 (YKCKFTGCDKAFSQLSNLQSHSRCH), 238-260 (FKCNSCYKCFTDEQSLLDHIPKH), and 269-291 (HICPFCGKSYTQQTYLQKHMTKH). The segment at 390 to 406 (PGFNMITPLENIQRYNG) is interacts with mab-10. The span at 423-444 (VSSTPSSTSSSSAGSSSSQGGV) shows a compositional bias: low complexity. Residues 423–459 (VSSTPSSTSSSSAGSSSSQGGVFNPQSLINNMKNHSY) form a disordered region. A compositionally biased stretch (polar residues) spans 446 to 459 (NPQSLINNMKNHSY).

As to quaternary structure, interacts (via C-terminus) with transcription cofactor mab-10. In terms of tissue distribution, expressed in lateral hypodermal seam cells (at protein level).

It is found in the nucleus. Transcription factor which regulates the expression of various genes, including those involved in cuticle synthesis and maintenance, such as collagens, and in lipid metabolism. Binds to promoter regions of genes, at 5'-[(T/G)TTTTTT(A/T/C/G)]-3' consensus sequences. Heterochronic protein which controls the choice of stage specific cell fates, including at the juvenile to adult transition. Promotes differentiation, together with transcriptional cofactor mab-10, perhaps as part of a transcriptional complex. Required for vulval morphogenesis and egg laying; perhaps by acting in a subset of the lateral seam cells. Involved in the exit of seam cells from the cell cycle. Required for specification of uterine pi-cell fate, acting upstream of lin-12 Notch signaling, perhaps via maintenance of lag-2 expression in the anchor cell (AC). Involved in morphogenesis of the specialized male tail used in mating. Acts cell non-autonomously from the hypodermis to regulate expression of genes in the intestine, including genes involved in lipid metabolism. May regulate vitellogenesis via the mTORC2 signaling mediated pathway, independently of daf-16. May promote nuclear accumulation of mab-10 in seam cells post-transcriptionally. Dispensable for seam cell fusion. In terms of biological role, required for seam cell fusion. In Caenorhabditis elegans, this protein is Zinc finger transcription factor lin-29.